The chain runs to 273 residues: Ribosomal RNA small subunit methyltransferase A (273 aa).

Residues asparagine 19, leucine 21, glycine 46, glutamate 67, aspartate 92, and asparagine 113 each coordinate S-adenosyl-L-methionine.

It belongs to the class I-like SAM-binding methyltransferase superfamily. rRNA adenine N(6)-methyltransferase family. RsmA subfamily.

It is found in the cytoplasm. The enzyme catalyses adenosine(1518)/adenosine(1519) in 16S rRNA + 4 S-adenosyl-L-methionine = N(6)-dimethyladenosine(1518)/N(6)-dimethyladenosine(1519) in 16S rRNA + 4 S-adenosyl-L-homocysteine + 4 H(+). Specifically dimethylates two adjacent adenosines (A1518 and A1519) in the loop of a conserved hairpin near the 3'-end of 16S rRNA in the 30S particle. May play a critical role in biogenesis of 30S subunits. This is Ribosomal RNA small subunit methyltransferase A from Hahella chejuensis (strain KCTC 2396).